The following is a 92-amino-acid chain: Protein S100-B (92 aa).

Position 2 is an N-acetylserine (S2). EF-hand domains follow at residues 13–48 (DVFH…LEEI) and 49–84 (KEQE…ITTA). H16 provides a ligand contact to Zn(2+). Positions 19, 22, and 24 each coordinate Ca(2+). H26 serves as a coordination point for Zn(2+). Residues D62, D64, D66, E68, and E73 each contribute to the Ca(2+) site. Zn(2+) is bound by residues H86 and H91.

It belongs to the S-100 family. In terms of assembly, dimer of either two alpha chains, or two beta chains, or one alpha and one beta chain. The S100B dimer binds two molecules of STK38. Interacts with CACYBP in a calcium-dependent manner. Interacts with ATAD3A; this interaction probably occurs in the cytosol prior to ATAD3A mitochondrial targeting. Interacts with S100A6. The S100B dimer interacts with two molecules of CAPZA1. Interacts with AGER. Interacts with PPP5C (via TPR repeats); the interaction is calcium-dependent and modulates PPP5C activity. Interacts with TPPP; this interaction inhibits TPPP dimerization. Interacts with isoform CLSTN3beta of CLSTN3; interaction promotes secretion.

It localises to the cytoplasm. The protein resides in the nucleus. The protein localises to the secreted. Functionally, small zinc- and- and calcium-binding protein that is highly expressed in astrocytes and constitutes one of the most abundant soluble proteins in brain. Weakly binds calcium but binds zinc very tightly-distinct binding sites with different affinities exist for both ions on each monomer. Physiological concentrations of potassium ion antagonize the binding of both divalent cations, especially affecting high-affinity calcium-binding sites. Acts as a neurotrophic factor that promotes astrocytosis and axonal proliferation. Involved in innervation of thermogenic adipose tissue by acting as an adipocyte-derived neurotrophic factor that promotes sympathetic innervation of adipose tissue. Binds to and initiates the activation of STK38 by releasing autoinhibitory intramolecular interactions within the kinase. Interaction with AGER after myocardial infarction may play a role in myocyte apoptosis by activating ERK1/2 and p53/TP53 signaling. Could assist ATAD3A cytoplasmic processing, preventing aggregation and favoring mitochondrial localization. May mediate calcium-dependent regulation on many physiological processes by interacting with other proteins, such as TPR-containing proteins, and modulating their activity. This is Protein S100-B (S100B) from Bos taurus (Bovine).